Here is a 382-residue protein sequence, read N- to C-terminus: Solvent efflux pump periplasmic linker SrpA (382 aa).

The signal sequence occupies residues 1–23 (MRQIRSPRALRVIPLTALMLISG). The N-palmitoyl cysteine moiety is linked to residue Cys-24. The S-diacylglycerol cysteine moiety is linked to residue Cys-24. Positions 98-127 (RTYEAQLRRAEANRTSAQNLARRYETLLKT) form a coiled coil.

It belongs to the membrane fusion protein (MFP) (TC 8.A.1) family.

Its subcellular location is the cell inner membrane. The periplasmic linker protein component of an organic solvent efflux pump. Involved in export of a number of low log POW compounds including hexane (log POW 3.5), toluene (log POW 2.5) and dimethylphthalate (log POW 2.3). The solvent resistance phenotype has been postulated to depend on the operon expression level. In Pseudomonas putida (Arthrobacter siderocapsulatus), this protein is Solvent efflux pump periplasmic linker SrpA (srpA).